The chain runs to 372 residues: Protein RecA (372 aa).

An ATP-binding site is contributed by 81 to 88 (GPESSGKT).

This sequence belongs to the RecA family.

The protein resides in the cytoplasm. Can catalyze the hydrolysis of ATP in the presence of single-stranded DNA, the ATP-dependent uptake of single-stranded DNA by duplex DNA, and the ATP-dependent hybridization of homologous single-stranded DNAs. It interacts with LexA causing its activation and leading to its autocatalytic cleavage. The sequence is that of Protein RecA from Haemophilus ducreyi (strain 35000HP / ATCC 700724).